Reading from the N-terminus, the 437-residue chain is Tryptophan--tRNA ligase (437 aa).

Positions 74–82 (PSGKVHLGH) match the 'HIGH' region motif. Positions 321 to 325 (KMSSS) match the 'KMSKS' region motif.

This sequence belongs to the class-I aminoacyl-tRNA synthetase family.

The protein resides in the cytoplasm. It catalyses the reaction tRNA(Trp) + L-tryptophan + ATP = L-tryptophyl-tRNA(Trp) + AMP + diphosphate + H(+). In Methanosarcina acetivorans (strain ATCC 35395 / DSM 2834 / JCM 12185 / C2A), this protein is Tryptophan--tRNA ligase.